Here is a 181-residue protein sequence, read N- to C-terminus: Large ribosomal subunit protein uL5 (181 aa).

Belongs to the universal ribosomal protein uL5 family. As to quaternary structure, part of the 50S ribosomal subunit; part of the 5S rRNA/L5/L18/L25 subcomplex. Contacts the 5S rRNA and the P site tRNA. Forms a bridge to the 30S subunit in the 70S ribosome.

Functionally, this is one of the proteins that bind and probably mediate the attachment of the 5S RNA into the large ribosomal subunit, where it forms part of the central protuberance. In the 70S ribosome it contacts protein S13 of the 30S subunit (bridge B1b), connecting the 2 subunits; this bridge is implicated in subunit movement. Contacts the P site tRNA; the 5S rRNA and some of its associated proteins might help stabilize positioning of ribosome-bound tRNAs. The sequence is that of Large ribosomal subunit protein uL5 from Mycoplasmopsis pulmonis (strain UAB CTIP) (Mycoplasma pulmonis).